The primary structure comprises 288 residues: 18S rRNA aminocarboxypropyltransferase (288 aa).

S-adenosyl-L-methionine is bound by residues serine 43, valine 91, leucine 114, and tryptophan 129. Polar residues predominate over residues 209–221 (IWSAGNLNHKPTL). The tract at residues 209–267 (IWSAGNLNHKPTLNTSSTHSNSEESRSPLHEPSEASLAHDEHSIPTDDNEETLTNLQAN) is disordered. Over residues 229–253 (NSEESRSPLHEPSEASLAHDEHSIP) the composition is skewed to basic and acidic residues.

Belongs to the TDD superfamily. TSR3 family.

The protein resides in the cytoplasm. Its subcellular location is the nucleus. The catalysed reaction is an N(1)-methylpseudouridine in rRNA + S-adenosyl-L-methionine = N(1)-methyl-N(3)-[(3S)-3-amino-3-carboxypropyl]pseudouridine in rRNA + S-methyl-5'-thioadenosine + H(+). It carries out the reaction N(1)-methylpseudouridine(1191) in yeast 18S rRNA + S-adenosyl-L-methionine = N(1)-methyl-N(3)-[(3S)-3-amino-3-carboxypropyl]pseudouridine(1191) in yeast 18S rRNA + S-methyl-5'-thioadenosine + H(+). In terms of biological role, aminocarboxypropyltransferase that catalyzes the aminocarboxypropyl transfer on pseudouridine at position 1191 (Psi1191) in 18S rRNA. It constitutes the last step in biosynthesis of the hypermodified N1-methyl-N3-(3-amino-3-carboxypropyl) pseudouridine (m1acp3-Psi) conserved in eukaryotic 18S rRNA. Required for processing 35S pre-rRNA at site D. This chain is 18S rRNA aminocarboxypropyltransferase, found in Schizosaccharomyces pombe (strain 972 / ATCC 24843) (Fission yeast).